We begin with the raw amino-acid sequence, 329 residues long: Glutamine synthetase (329 aa).

A GS beta-grasp domain is found at 4-86 (YKLEYIWLDA…VMCEVMMPDA (83 aa)). A GS catalytic domain is found at 89 to 329 (PHASNTRATV…GDPYQMLLSS (241 aa)). Glu109 and Glu111 together coordinate Mg(2+). Glu167 is a binding site for ATP. Residues Glu172 and Glu179 each contribute to the Mg(2+) site. Glu278 provides a ligand contact to L-glutamate.

The protein belongs to the glutamine synthetase family. In terms of assembly, homooctamer and homotetramer. Mg(2+) is required as a cofactor.

It localises to the cytoplasm. The catalysed reaction is L-glutamate + NH4(+) + ATP = L-glutamine + ADP + phosphate + H(+). Functionally, catalyzes the ATP-dependent biosynthesis of glutamine from glutamate and ammonia. The protein is Glutamine synthetase of Rhizobium meliloti (Ensifer meliloti).